Consider the following 801-residue polypeptide: Putative mRNA-capping enzyme P5 (801 aa).

It belongs to the phytoreovirus protein P5 family.

Its subcellular location is the virion. The protein localises to the host cytoplasm. It carries out the reaction a 5'-end diphospho-ribonucleoside in mRNA + GTP + H(+) = a 5'-end (5'-triphosphoguanosine)-ribonucleoside in mRNA + diphosphate. Its pathway is mRNA processing; mRNA capping. Functionally, enzyme involved in mRNA capping (Potential). Binds to GTP and might have guanylyltransferase activity. Together with the RNA-directed RNA polymerase P1 and protein P7, forms an transcriptional complex positioned near the channels situated at each of the five-fold vertices of the core. The sequence is that of Putative mRNA-capping enzyme P5 from Alopecurus aequalis (Barnyard grass).